Consider the following 592-residue polypeptide: Putative phosphatidylinositol 4-kinase alpha-like protein P2 (592 aa).

Residues 180-318 are pleckstrin homology (PH) domain conferring phosphoinositide binding specificity; sequence EQLVEENTGS…ISWQAAIFKL (139 aa). One can recognise a PI3K/PI4K catalytic domain in the interval 275-576; that stretch reads KVKRCGVSEL…VIQSCFLSNR (302 aa). Residues 281–287 form a G-loop region; that stretch reads VSELEKE. A catalytic loop region spans residues 441–449; that stretch reads QIKDRHNGN. The interval 460-484 is activation loop; it reads HIDFGFMFESSPGGNLGWEPDIKLT.

The protein belongs to the PI3/PI4-kinase family. Type III PI4K subfamily.

The sequence is that of Putative phosphatidylinositol 4-kinase alpha-like protein P2 (PI4KAP2) from Homo sapiens (Human).